The chain runs to 440 residues: 23S rRNA (uracil(1939)-C(5))-methyltransferase RlmD (440 aa).

A TRAM domain is found at 10–68 (KSTQPQRIEFTVDSLDHHCVGIGRHQGKAIFIEGALPGELVKARILEDKKQYAHAALQQ). Positions 81, 87, 90, and 169 each coordinate [4Fe-4S] cluster. S-adenosyl-L-methionine contacts are provided by Gln-273, Phe-302, Asn-307, Glu-323, Asp-350, and Asp-371. Cys-397 acts as the Nucleophile in catalysis.

This sequence belongs to the class I-like SAM-binding methyltransferase superfamily. RNA M5U methyltransferase family. RlmD subfamily.

It carries out the reaction uridine(1939) in 23S rRNA + S-adenosyl-L-methionine = 5-methyluridine(1939) in 23S rRNA + S-adenosyl-L-homocysteine + H(+). Functionally, catalyzes the formation of 5-methyl-uridine at position 1939 (m5U1939) in 23S rRNA. This chain is 23S rRNA (uracil(1939)-C(5))-methyltransferase RlmD, found in Aeromonas hydrophila subsp. hydrophila (strain ATCC 7966 / DSM 30187 / BCRC 13018 / CCUG 14551 / JCM 1027 / KCTC 2358 / NCIMB 9240 / NCTC 8049).